The chain runs to 475 residues: 3-isopropylmalate dehydratase large subunit (475 aa).

Residues Cys-347, Cys-407, and Cys-410 each contribute to the [4Fe-4S] cluster site. Residues 418–442 (LAPGERSASTSNRNFEGRQGKGGRT) form a disordered region.

Belongs to the aconitase/IPM isomerase family. LeuC type 1 subfamily. Heterodimer of LeuC and LeuD. It depends on [4Fe-4S] cluster as a cofactor.

The catalysed reaction is (2R,3S)-3-isopropylmalate = (2S)-2-isopropylmalate. Its pathway is amino-acid biosynthesis; L-leucine biosynthesis; L-leucine from 3-methyl-2-oxobutanoate: step 2/4. Catalyzes the isomerization between 2-isopropylmalate and 3-isopropylmalate, via the formation of 2-isopropylmaleate. The polypeptide is 3-isopropylmalate dehydratase large subunit (Streptomyces griseus subsp. griseus (strain JCM 4626 / CBS 651.72 / NBRC 13350 / KCC S-0626 / ISP 5235)).